A 121-amino-acid polypeptide reads, in one-letter code: Large ribosomal subunit protein bL17 (121 aa).

Belongs to the bacterial ribosomal protein bL17 family. As to quaternary structure, part of the 50S ribosomal subunit. Contacts protein L32.

In Rubrobacter xylanophilus (strain DSM 9941 / JCM 11954 / NBRC 16129 / PRD-1), this protein is Large ribosomal subunit protein bL17.